The following is an 89-amino-acid chain: Protein S100-A8 (89 aa).

2 consecutive EF-hand domains span residues 13–48 (IDVYHNYSNIQGNHHALYKNDFKKMVTTECPQFVQN) and 46–81 (VQNINIENLFRELDINSDNAINFEEFLAMVIKVGVA). Zn(2+) is bound by residues His-17 and His-27. Asp-33 is a binding site for Ca(2+). Residue Cys-42 is modified to S-nitrosocysteine. Ca(2+)-binding residues include Asp-59, Asn-61, Asp-63, and Glu-70. His-83 contributes to the Zn(2+) binding site.

The protein belongs to the S-100 family. As to quaternary structure, homodimer. Preferentially exists as a heterodimer or heterotetramer with S100A9 known as calprotectin (S100A8/A9). Calprotectin (S100A8/9) interacts with CEACAM3 and tubulin filaments in a calcium-dependent manner. Heterotetrameric calprotectin (S100A8/A9) interacts with ANXA6 and associates with tubulin filaments in activated monocytes. S100A8 and calprotectin (S100A8/9) interact with NCF2/P67PHOX, RAC1 and RAC2. Calprotectin (S100A8/9) interacts with CYBA and CYBB. S100A8 interacts with AGER, ATP2A2 and with the heterodimeric complex formed by TLR4 and LY96. Calprotectin (S100A8/9) interacts with NOS2 to form the iNOS-S100A8/A9 transnitrosylase complex. Calprotectin (S100A8/9) interacts with CD69.

It is found in the secreted. It localises to the cytoplasm. The protein localises to the cytoskeleton. Its subcellular location is the cell membrane. Calprotectin (S100A8/A9) activity on TLR4 signaling is inhibited by paquinimod. S100A8 is a calcium- and zinc-binding protein which plays a prominent role in the regulation of inflammatory processes and immune response. It can induce neutrophil chemotaxis and adhesion. Predominantly found as calprotectin (S100A8/A9) which has a wide plethora of intra- and extracellular functions. The intracellular functions include: facilitating leukocyte arachidonic acid trafficking and metabolism, modulation of the tubulin-dependent cytoskeleton during migration of phagocytes and activation of the neutrophilic NADPH-oxidase. Also participates in regulatory T-cell differentiation together with CD69. Activates NADPH-oxidase by facilitating the enzyme complex assembly at the cell membrane, transferring arachidonic acid, an essential cofactor, to the enzyme complex and S100A8 contributes to the enzyme assembly by directly binding to NCF2/P67PHOX. The extracellular functions involve pro-inflammatory, antimicrobial, oxidant-scavenging and apoptosis-inducing activities. Its pro-inflammatory activity includes recruitment of leukocytes, promotion of cytokine and chemokine production, and regulation of leukocyte adhesion and migration. Acts as an alarmin or a danger associated molecular pattern (DAMP) molecule and stimulates innate immune cells via binding to pattern recognition receptors such as Toll-like receptor 4 (TLR4) and receptor for advanced glycation endproducts (AGER). Binding to TLR4 and AGER activates the MAP-kinase and NF-kappa-B signaling pathways resulting in the amplification of the pro-inflammatory cascade. Has antimicrobial activity towards bacteria and fungi and exerts its antimicrobial activity probably via chelation of Zn(2+) which is essential for microbial growth. Can induce cell death via autophagy and apoptosis and this occurs through the cross-talk of mitochondria and lysosomes via reactive oxygen species (ROS) and the process involves BNIP3. Can regulate neutrophil number and apoptosis by an anti-apoptotic effect; regulates cell survival via ITGAM/ITGB and TLR4 and a signaling mechanism involving MEK-ERK. Its role as an oxidant scavenger has a protective role in preventing exaggerated tissue damage by scavenging oxidants. The iNOS-S100A8/A9 transnitrosylase complex is proposed to direct selective inflammatory stimulus-dependent S-nitrosylation of multiple targets such as GAPDH, ANXA5, EZR, MSN and VIM by recognizing a [IL]-x-C-x-x-[DE] motif; S100A8 seems to contribute to S-nitrosylation site selectivity. Functionally, (Microbial infection) Upon infection by murine coronavirus (MHV-A59), induces expansion of aberrant immature neutrophils in a TLR4-dependent manner. The sequence is that of Protein S100-A8 from Mus musculus (Mouse).